Here is a 255-residue protein sequence, read N- to C-terminus: Ornithine decarboxylase antizyme (255 aa).

This sequence belongs to the ODC antizyme family. As to quaternary structure, interacts with ODC and thereby sterically blocks ODC homodimerization.

Ornithine decarboxylase (ODC) antizyme protein that negatively regulates ODC activity and intracellular polyamine biosynthesis in response to increased intracellular polyamine levels. Binds to ODC monomers, inhibiting the assembly of the functional ODC homodimer, and targets the monomers for ubiquitin-independent proteolytic destruction by the 26S proteasome. The chain is Ornithine decarboxylase antizyme (OAZ1) from Candida glabrata (strain ATCC 2001 / BCRC 20586 / JCM 3761 / NBRC 0622 / NRRL Y-65 / CBS 138) (Yeast).